The following is a 172-amino-acid chain: Ly6/PLAUR domain-containing protein 6B (172 aa).

The N-terminal stretch at Met1 to Ala25 is a signal peptide. The 92-residue stretch at Phe46–Ala137 folds into the UPAR/Ly6 domain. Residues Phe46 to Ala140 form a sufficient for inhibiting alpha-7 nAChR currents region. Intrachain disulfides connect Cys48-Cys76, Cys51-Cys60, Cys69-Cys95, Cys101-Cys120, Cys106-Cys117, and Cys121-Cys126. Ser148 is lipidated: GPI-anchor amidated serine. A propeptide spans Gly149–Leu172 (removed in mature form).

It is found in the cell membrane. In terms of biological role, likely acts as a modulator of nicotinic acetylcholine receptors (nAChRs) activity. In vitro acts on nAChRs in a subtype- and stoichiometry-dependent manner. Modulates specifically alpha-3(3):beta-4(2) nAChRs by enhancing the sensitivity to ACh, decreasing ACh-induced maximal current response and increasing the rate of desensitization to ACh; has no effect on alpha-7 homomeric nAChRs; modulates alpha-3(2):alpha-5:beta-4(2) nAChRs in the context of CHRNA5/alpha-5 variant Asn-398 but not its wild-type sequence. However, according to another report in vitro it can weakly inhibits alpha-7 nAChRs. The protein is Ly6/PLAUR domain-containing protein 6B (Lypd6b) of Mus musculus (Mouse).